The chain runs to 125 residues: Large ribosomal subunit protein bL12 (125 aa).

This sequence belongs to the bacterial ribosomal protein bL12 family. As to quaternary structure, homodimer. Part of the ribosomal stalk of the 50S ribosomal subunit. Forms a multimeric L10(L12)X complex, where L10 forms an elongated spine to which 2 to 4 L12 dimers bind in a sequential fashion. Binds GTP-bound translation factors.

In terms of biological role, forms part of the ribosomal stalk which helps the ribosome interact with GTP-bound translation factors. Is thus essential for accurate translation. This Gluconobacter oxydans (strain 621H) (Gluconobacter suboxydans) protein is Large ribosomal subunit protein bL12.